The following is a 105-amino-acid chain: Nucleoid-associated protein SE_2306 (105 aa).

The disordered stretch occupies residues 1 to 40; that stretch reads MRGGGNMQQMMKQMQKMQKKMAQEQEKLKEERVAGTAGGG. Over residues 7–16 the composition is skewed to low complexity; sequence MQQMMKQMQK. Residues 21-33 show a composition bias toward basic and acidic residues; the sequence is MAQEQEKLKEERV.

The protein belongs to the YbaB/EbfC family. Homodimer.

It localises to the cytoplasm. The protein localises to the nucleoid. Binds to DNA and alters its conformation. May be involved in regulation of gene expression, nucleoid organization and DNA protection. This chain is Nucleoid-associated protein SE_2306, found in Staphylococcus epidermidis (strain ATCC 12228 / FDA PCI 1200).